Here is a 426-residue protein sequence, read N- to C-terminus: 6-Hydroxy-7-prenyldeoxybrevianamide E synthase notC' (426 aa).

Glu-94 is a binding site for substrate. Positions 105, 191, and 193 each coordinate dimethylallyl diphosphate. Residue Tyr-195 participates in substrate binding. Lys-267, Tyr-269, Gln-352, Tyr-354, Tyr-418, and Tyr-422 together coordinate dimethylallyl diphosphate.

It belongs to the tryptophan dimethylallyltransferase family.

The enzyme catalyses 6-hydroxydeoxybrevianamide E + dimethylallyl diphosphate = notoamide S + diphosphate. Its pathway is alkaloid biosynthesis. Its function is as follows. Prenyltransferase; part of the gene cluster that mediates the biosynthesis of notoamide, a fungal indole alkaloid that belongs to a family of natural products containing a characteristic bicyclo[2.2.2]diazaoctane core. The first step of notoamide biosynthesis involves coupling of L-proline and L-tryptophan by the bimodular NRPS notE', to produce cyclo-L-tryptophan-L-proline called brevianamide F. The reverse prenyltransferase notF' then acts as a deoxybrevianamide E synthase and converts brevianamide F to deoxybrevianamide E via reverse prenylation at C-2 of the indole ring leading to the bicyclo[2.2.2]diazaoctane core. Deoxybrevianamide E is further hydroxylated at C-6 of the indole ring, likely catalyzed by the cytochrome P450 monooxygenase notG', to yield 6-hydroxy-deoxybrevianamide E. 6-hydroxy-deoxybrevianamide E is a specific substrate of the prenyltransferase notC' for normal prenylation at C-7 to produce 6-hydroxy-7-prenyl-deoxybrevianamide, also called notoamide S. As the proposed pivotal branching point in notoamide biosynthesis, notoamide S can be diverted to notoamide E through an oxidative pyran ring closure putatively catalyzed by either notH' cytochrome P450 monooxygenase or the notD' FAD-linked oxidoreductase. This step would be followed by an indole 2,3-epoxidation-initiated pinacol-like rearrangement catalyzed by the notB' FAD-dependent monooxygenase leading to the formation of notoamide C and notoamide D. On the other hand notoamide S is converted to notoamide T by notH' (or notD'), a bifunctional oxidase that also functions as the intramolecular Diels-Alderase responsible for generation of (-)-notoamide T. To generate antipodal (+)-notoaminide T, notH (or notD) in Aspergillus strain MF297-2 is expected to catalyze a Diels-Alder reaction leading to the opposite stereochemistry. The remaining oxidoreductase notD' (or notH') likely catalyzes the oxidative pyran ring formation to yield (-)-stephacidin A. The FAD-dependent monooxygenase notI' is highly similar to notB' and is predicted to catalyze a similar conversion from (-)-stephacidin A to (+)-notoamide B via the 2,3-epoxidation of (-)-stephacidin A followed by a pinacol-type rearrangement. Finally, it remains unclear which enzyme could be responsible for the final hydroxylation steps leading to notoamide A and sclerotiamide. The protein is 6-Hydroxy-7-prenyldeoxybrevianamide E synthase notC' of Aspergillus versicolor.